The following is a 187-amino-acid chain: Phosphatidylethanolamine-binding protein 1 (187 aa).

A phosphoserine mark is found at Ser-6 and Ser-13. Phosphothreonine is present on Thr-42. 2 positions are modified to phosphoserine: Ser-52 and Ser-98. An interaction with RAF1 region spans residues 93–134; it reads KGGNISSGTVLSDYVGSGPPKGTGLHRYVWLVYEQDGPLKCD.

This sequence belongs to the phosphatidylethanolamine-binding protein family. In terms of assembly, has a tendency to form dimers by disulfide cross-linking. Interacts with RAF1 and this interaction is enhanced if RAF1 is phosphorylated on residues 'Ser-338', 'Ser-339', 'Tyr-340' and 'Tyr-341'. Interacts with ALOX15; in response to IL13/interleukin-13, prevents the interaction of PEBP1 with RAF1 to activate the ERK signaling cascade.

Its subcellular location is the cytoplasm. Binds ATP, opioids and phosphatidylethanolamine. Has lower affinity for phosphatidylinositol and phosphatidylcholine. Serine protease inhibitor which inhibits thrombin, neuropsin and chymotrypsin but not trypsin, tissue type plasminogen activator and elastase. Inhibits the kinase activity of RAF1 by inhibiting its activation and by dissociating the RAF1/MEK complex and acting as a competitive inhibitor of MEK phosphorylation. Functionally, HCNP may be involved in the function of the presynaptic cholinergic neurons of the central nervous system. HCNP increases the production of choline acetyltransferase but not acetylcholinesterase. Seems to be mediated by a specific receptor. The polypeptide is Phosphatidylethanolamine-binding protein 1 (PEBP1) (Oryctolagus cuniculus (Rabbit)).